The sequence spans 306 residues: Phosphoribosylaminoimidazole-succinocarboxamide synthase (306 aa).

Ser2 carries the post-translational modification N-acetylserine.

It belongs to the SAICAR synthetase family. Monomer.

The enzyme catalyses 5-amino-1-(5-phospho-D-ribosyl)imidazole-4-carboxylate + L-aspartate + ATP = (2S)-2-[5-amino-1-(5-phospho-beta-D-ribosyl)imidazole-4-carboxamido]succinate + ADP + phosphate + 2 H(+). It functions in the pathway purine metabolism; IMP biosynthesis via de novo pathway; 5-amino-1-(5-phospho-D-ribosyl)imidazole-4-carboxamide from 5-amino-1-(5-phospho-D-ribosyl)imidazole-4-carboxylate: step 1/2. Functionally, catalyzes the reaction of 4-carboxy-5-aminoimidazole ribotide (CAIR) and aspartic acid with the formation of N-succinyl-5-amino-imidazole-4-carboxamide ribotide (SAICAR) in the purine biosynthesis pathway. The sequence is that of Phosphoribosylaminoimidazole-succinocarboxamide synthase (ADE1) from Saccharomyces cerevisiae (strain ATCC 204508 / S288c) (Baker's yeast).